A 350-amino-acid chain; its full sequence is Ookinete surface protein PIMMS43 (350 aa).

The signal sequence occupies residues 1 to 24; the sequence is MIKLCTFLSLFLIFFFLNLNAING. Residues 330–350 form a helical membrane-spanning segment; it reads NSIASKLMSVFVFIAVIIYIL.

Forms multimers, perhaps with an unknown protein(s).

The protein resides in the membrane. Involved in ookinete evasion of the mosquito complement-like response, oocyst maturation, sporozoite development and infectivity. In Plasmodium berghei (strain Anka), this protein is Ookinete surface protein PIMMS43.